Here is a 1198-residue protein sequence, read N- to C-terminus: Tetratricopeptide repeat protein 17 (1198 aa).

Residues 295–328 (FTSYYTLGNIYAMLGEYNHSVLCYDHALQAKPGF) form a TPR 1 repeat. Positions 340–382 (CQQKLEQKLEAQHRSLQRTLNELKEYQKQHDHYLRQQEILEKH) form a coiled coil. 2 TPR repeats span residues 619–652 (WLIL…APVQ) and 689–722 (PLTF…TTRC). Disordered regions lie at residues 771–825 (PQSL…KSEE) and 903–924 (KKPK…QAEN). Residues 903 to 914 (KKPKGDHKKPPG) are compositionally biased toward basic residues. TPR repeat units follow at residues 1071–1105 (SWVL…APHQ), 1108–1141 (DVPL…APHF), and 1142–1175 (AVNH…QPEF).

Belongs to the TTC17 family. As to quaternary structure, interacts with CATIP. As to expression, expressed in germ cells as well as in somatic cells of the testis (at protein level). Ubiquitous.

The protein localises to the cytoplasm. Its subcellular location is the cell membrane. It is found in the cytoskeleton. Its function is as follows. Plays a role in primary ciliogenesis by modulating actin polymerization. This Rattus norvegicus (Rat) protein is Tetratricopeptide repeat protein 17 (Ttc17).